Here is a 466-residue protein sequence, read N- to C-terminus: UDP-N-acetylmuramoylalanine--D-glutamate ligase (466 aa).

121 to 127 is an ATP binding site; it reads GTNGKST.

This sequence belongs to the MurCDEF family.

The protein resides in the cytoplasm. It catalyses the reaction UDP-N-acetyl-alpha-D-muramoyl-L-alanine + D-glutamate + ATP = UDP-N-acetyl-alpha-D-muramoyl-L-alanyl-D-glutamate + ADP + phosphate + H(+). Its pathway is cell wall biogenesis; peptidoglycan biosynthesis. Cell wall formation. Catalyzes the addition of glutamate to the nucleotide precursor UDP-N-acetylmuramoyl-L-alanine (UMA). The protein is UDP-N-acetylmuramoylalanine--D-glutamate ligase of Nitrobacter hamburgensis (strain DSM 10229 / NCIMB 13809 / X14).